Reading from the N-terminus, the 274-residue chain is Cytochrome b-c1 complex subunit Rieske, mitochondrial (274 aa).

The Mitochondrial matrix segment spans residues 79 to 110 (SHTDVKVPDFSDYRRAEVLDSTKSSKESSEAR). Residues 111-137 (KGFSYLVTATTTVGVAYAAKNVVSQFV) traverse the membrane as a helical segment. The Mitochondrial intermembrane portion of the chain corresponds to 138–274 (SSMSASADVL…FTSDDVVVVG (137 aa)). One can recognise a Rieske domain in the interval 187 to 272 (EAAVEVSQLR…YEFTSDDVVV (86 aa)). Positions 217, 219, 236, 239, and 241 each coordinate [2Fe-2S] cluster. A disulfide bond links cysteine 222 and cysteine 238.

Belongs to the Rieske iron-sulfur protein family. In terms of assembly, component of the ubiquinol-cytochrome c oxidoreductase (cytochrome b-c1 complex, complex III, CIII), a multisubunit enzyme composed of 11 subunits. The complex is composed of 3 respiratory subunits cytochrome b, cytochrome c1 and Rieske protein UQCRFS1, 2 core protein subunits UQCRC1/QCR1 and UQCRC2/QCR2, and 6 low-molecular weight protein subunits UQCRH/QCR6, UQCRB/QCR7, UQCRQ/QCR8, UQCR10/QCR9, UQCR11/QCR10 and subunit 9, the cleavage product of Rieske protein UQCRFS1. The complex exists as an obligatory dimer and forms supercomplexes (SCs) in the inner mitochondrial membrane with NADH-ubiquinone oxidoreductase (complex I, CI) and cytochrome c oxidase (complex IV, CIV), resulting in different assemblies (supercomplex SCI(1)III(2)IV(1) and megacomplex MCI(2)III(2)IV(2)). Incorporation of the Rieske protein UQCRFS1 is the penultimate step in complex III assembly. Interacts with TTC19, which is involved in the clearance of UQCRFS1 fragments. As to quaternary structure, component of the ubiquinol-cytochrome c oxidoreductase (cytochrome b-c1 complex, complex III, CIII). Subunit 9 corresponds to the mitochondrial targeting sequence (MTS) of Rieske protein UQCRFS1. It is retained after processing and incorporated inside complex III, where it remains bound to the complex and localizes between the 2 core subunits UQCRC1/QCR1 and UQCRC2/QCR2. It depends on [2Fe-2S] cluster as a cofactor. Post-translationally, proteolytic processing is necessary for the correct insertion of UQCRFS1 in the complex III dimer. Several fragments are generated during UQCRFS1 insertion, most probably due to the endogenous matrix-processing peptidase (MPP) activity of the 2 core protein subunits UQCRC1/QCR1 and UQCRC2/QCR2, which are homologous to the 2 mitochondrial-processing peptidase (MPP) subunits beta-MPP and alpha-MPP respectively. The action of the protease is also necessary for the clearance of the UQCRFS1 fragments.

It is found in the mitochondrion inner membrane. It catalyses the reaction a quinol + 2 Fe(III)-[cytochrome c](out) = a quinone + 2 Fe(II)-[cytochrome c](out) + 2 H(+)(out). Its function is as follows. Component of the ubiquinol-cytochrome c oxidoreductase, a multisubunit transmembrane complex that is part of the mitochondrial electron transport chain which drives oxidative phosphorylation. The respiratory chain contains 3 multisubunit complexes succinate dehydrogenase (complex II, CII), ubiquinol-cytochrome c oxidoreductase (cytochrome b-c1 complex, complex III, CIII) and cytochrome c oxidase (complex IV, CIV), that cooperate to transfer electrons derived from NADH and succinate to molecular oxygen, creating an electrochemical gradient over the inner membrane that drives transmembrane transport and the ATP synthase. The cytochrome b-c1 complex catalyzes electron transfer from ubiquinol to cytochrome c, linking this redox reaction to translocation of protons across the mitochondrial inner membrane, with protons being carried across the membrane as hydrogens on the quinol. In the process called Q cycle, 2 protons are consumed from the matrix, 4 protons are released into the intermembrane space and 2 electrons are passed to cytochrome c. The Rieske protein is a catalytic core subunit containing a [2Fe-2S] iron-sulfur cluster. It cycles between 2 conformational states during catalysis to transfer electrons from the quinol bound in the Q(0) site in cytochrome b to cytochrome c1. Incorporation of UQCRFS1 is the penultimate step in complex III assembly. In terms of biological role, component of the ubiquinol-cytochrome c oxidoreductase (cytochrome b-c1 complex, complex III, CIII). UQCRFS1 undergoes proteolytic processing once it is incorporated in the complex III dimer. One of the fragments, called subunit 9, corresponds to its mitochondrial targeting sequence (MTS). The proteolytic processing is necessary for the correct insertion of UQCRFS1 in the complex III dimer, but the persistence of UQCRFS1-derived fragments may prevent newly imported UQCRFS1 to be processed and assembled into complex III and is detrimental for the complex III structure and function. The protein is Cytochrome b-c1 complex subunit Rieske, mitochondrial of Mus musculus (Mouse).